The chain runs to 118 residues: MRVKNAVNSKKKKKKILKFVKGFRGALRRRYSLAKQSYYRALKFAFDGRRNKKGNFRKIWITRINIAARNAGLKYNELIHGLKLANVAINRKMLAELAVNDPESFKEYVNIAKAALGK.

This sequence belongs to the bacterial ribosomal protein bL20 family.

In terms of biological role, binds directly to 23S ribosomal RNA and is necessary for the in vitro assembly process of the 50S ribosomal subunit. It is not involved in the protein synthesizing functions of that subunit. The chain is Large ribosomal subunit protein bL20 from Fervidobacterium nodosum (strain ATCC 35602 / DSM 5306 / Rt17-B1).